A 725-amino-acid polypeptide reads, in one-letter code: Catalase-peroxidase 1 (725 aa).

The segment at residues 96–224 is a cross-link (tryptophyl-tyrosyl-methioninium (Trp-Tyr) (with M-250)); sequence WHSAGSYRLA…LAAVQMGLIY (129 aa). Catalysis depends on His-97, which acts as the Proton acceptor. The tryptophyl-tyrosyl-methioninium (Tyr-Met) (with W-96) cross-link spans 224-250; that stretch reads YVNPEGVDGNPDPLRTAKDVRETFKRM. Heme b is bound at residue His-265.

This sequence belongs to the peroxidase family. Peroxidase/catalase subfamily. In terms of assembly, homodimer or homotetramer. Heme b serves as cofactor. Formation of the three residue Trp-Tyr-Met cross-link is important for the catalase, but not the peroxidase activity of the enzyme.

The enzyme catalyses H2O2 + AH2 = A + 2 H2O. The catalysed reaction is 2 H2O2 = O2 + 2 H2O. In terms of biological role, bifunctional enzyme with both catalase and broad-spectrum peroxidase activity. The sequence is that of Catalase-peroxidase 1 from Idiomarina loihiensis (strain ATCC BAA-735 / DSM 15497 / L2-TR).